A 131-amino-acid polypeptide reads, in one-letter code: MARRKRAAARKKKVKKNIESGIATINSTFNNTLVNITDSDGNTMAWSSSGACGFKGSRKGTPYAAQIAAETAAKTAMEDGLKGVEVRVKGPGSGREAAIRSLQAAGLEINAIKDITPIPHNGCRPPKRRRV.

Belongs to the universal ribosomal protein uS11 family. In terms of assembly, part of the 30S ribosomal subunit. Interacts with proteins S7 and S18. Binds to IF-3.

Its function is as follows. Located on the platform of the 30S subunit, it bridges several disparate RNA helices of the 16S rRNA. Forms part of the Shine-Dalgarno cleft in the 70S ribosome. This is Small ribosomal subunit protein uS11 from Natranaerobius thermophilus (strain ATCC BAA-1301 / DSM 18059 / JW/NM-WN-LF).